The following is a 211-amino-acid chain: Uracil phosphoribosyltransferase (211 aa).

Residues Arg81, Arg106, and 133–141 (DPMLATGNS) contribute to the 5-phospho-alpha-D-ribose 1-diphosphate site. Uracil is bound by residues Ile196 and 201–203 (GDA). Asp202 provides a ligand contact to 5-phospho-alpha-D-ribose 1-diphosphate.

This sequence belongs to the UPRTase family. Mg(2+) is required as a cofactor.

The enzyme catalyses UMP + diphosphate = 5-phospho-alpha-D-ribose 1-diphosphate + uracil. The protein operates within pyrimidine metabolism; UMP biosynthesis via salvage pathway; UMP from uracil: step 1/1. Allosterically activated by GTP. Its function is as follows. Catalyzes the conversion of uracil and 5-phospho-alpha-D-ribose 1-diphosphate (PRPP) to UMP and diphosphate. The protein is Uracil phosphoribosyltransferase of Myxococcus xanthus (strain DK1622).